We begin with the raw amino-acid sequence, 353 residues long: Chorismate synthase (353 aa).

NADP(+) is bound by residues Arg48 and Arg54. Residues 125–127 (RSS), 238–239 (NA), Gly278, 293–297 (KPTSS), and Arg319 each bind FMN.

The protein belongs to the chorismate synthase family. In terms of assembly, homotetramer. FMNH2 is required as a cofactor.

It catalyses the reaction 5-O-(1-carboxyvinyl)-3-phosphoshikimate = chorismate + phosphate. Its pathway is metabolic intermediate biosynthesis; chorismate biosynthesis; chorismate from D-erythrose 4-phosphate and phosphoenolpyruvate: step 7/7. Its function is as follows. Catalyzes the anti-1,4-elimination of the C-3 phosphate and the C-6 proR hydrogen from 5-enolpyruvylshikimate-3-phosphate (EPSP) to yield chorismate, which is the branch point compound that serves as the starting substrate for the three terminal pathways of aromatic amino acid biosynthesis. This reaction introduces a second double bond into the aromatic ring system. The chain is Chorismate synthase from Bordetella parapertussis (strain 12822 / ATCC BAA-587 / NCTC 13253).